Reading from the N-terminus, the 160-residue chain is 2-C-methyl-D-erythritol 2,4-cyclodiphosphate synthase (160 aa).

A divalent metal cation-binding residues include Asp9 and His11. Residues 9-11 (DVH) and 35-36 (HS) contribute to the 4-CDP-2-C-methyl-D-erythritol 2-phosphate site. His43 is a binding site for a divalent metal cation. Residues 57-59 (DIG), 62-66 (FPDND), and Phe140 each bind 4-CDP-2-C-methyl-D-erythritol 2-phosphate.

This sequence belongs to the IspF family. Homotrimer. The cofactor is a divalent metal cation.

It carries out the reaction 4-CDP-2-C-methyl-D-erythritol 2-phosphate = 2-C-methyl-D-erythritol 2,4-cyclic diphosphate + CMP. It participates in isoprenoid biosynthesis; isopentenyl diphosphate biosynthesis via DXP pathway; isopentenyl diphosphate from 1-deoxy-D-xylulose 5-phosphate: step 4/6. Its function is as follows. Involved in the biosynthesis of isopentenyl diphosphate (IPP) and dimethylallyl diphosphate (DMAPP), two major building blocks of isoprenoid compounds. Catalyzes the conversion of 4-diphosphocytidyl-2-C-methyl-D-erythritol 2-phosphate (CDP-ME2P) to 2-C-methyl-D-erythritol 2,4-cyclodiphosphate (ME-CPP) with a corresponding release of cytidine 5-monophosphate (CMP). This is 2-C-methyl-D-erythritol 2,4-cyclodiphosphate synthase from Fusobacterium nucleatum subsp. nucleatum (strain ATCC 25586 / DSM 15643 / BCRC 10681 / CIP 101130 / JCM 8532 / KCTC 2640 / LMG 13131 / VPI 4355).